The primary structure comprises 458 residues: Cell division protein FtsZ (458 aa).

GTP is bound by residues 22–26 (GAGGN), 109–111 (GTG), E140, R144, and D188. A disordered region spans residues 319 to 458 (KAEEEASKQP…IPFFKHRRQD (140 aa)). Residues 368–379 (NTISHEAPTQSI) show a composition bias toward polar residues. Residues 401–418 (KQDRKENNRPQPVENKEK) show a composition bias toward basic and acidic residues. Residues 425 to 439 (SFSSDDSTSISQIET) are compositionally biased toward low complexity.

This sequence belongs to the FtsZ family. As to quaternary structure, homodimer. Polymerizes to form a dynamic ring structure in a strictly GTP-dependent manner. Interacts directly with several other division proteins.

Its subcellular location is the cytoplasm. In terms of biological role, essential cell division protein that forms a contractile ring structure (Z ring) at the future cell division site. The regulation of the ring assembly controls the timing and the location of cell division. One of the functions of the FtsZ ring is to recruit other cell division proteins to the septum to produce a new cell wall between the dividing cells. Binds GTP and shows GTPase activity. In Lactobacillus johnsonii (strain CNCM I-12250 / La1 / NCC 533), this protein is Cell division protein FtsZ.